Here is a 218-residue protein sequence, read N- to C-terminus: Protein GrpE (218 aa).

A compositionally biased stretch (basic and acidic residues) spans 1-21 (MSDKQREAERQQSEDKAHSEA). Residues 1 to 66 (MSDKQREAER…LEEARARAEE (66 aa)) form a disordered region. The segment covering 24–36 (AEAGQAPEAQAAE) has biased composition (low complexity).

The protein belongs to the GrpE family. As to quaternary structure, homodimer.

The protein localises to the cytoplasm. Its function is as follows. Participates actively in the response to hyperosmotic and heat shock by preventing the aggregation of stress-denatured proteins, in association with DnaK and GrpE. It is the nucleotide exchange factor for DnaK and may function as a thermosensor. Unfolded proteins bind initially to DnaJ; upon interaction with the DnaJ-bound protein, DnaK hydrolyzes its bound ATP, resulting in the formation of a stable complex. GrpE releases ADP from DnaK; ATP binding to DnaK triggers the release of the substrate protein, thus completing the reaction cycle. Several rounds of ATP-dependent interactions between DnaJ, DnaK and GrpE are required for fully efficient folding. In Alkalilimnicola ehrlichii (strain ATCC BAA-1101 / DSM 17681 / MLHE-1), this protein is Protein GrpE.